Consider the following 99-residue polypeptide: uncharacterized protein (99 aa).

Residues 1 to 17 form the signal peptide; it reads MMMNAFFPAMALIVLVG. C18 is lipidated: N-palmitoyl cysteine. Residue C18 is the site of S-diacylglycerol cysteine attachment.

The protein localises to the cell membrane. This is an uncharacterized protein from Escherichia coli O6:H1 (strain CFT073 / ATCC 700928 / UPEC).